The sequence spans 94 residues: Co-chaperonin GroES (94 aa).

This sequence belongs to the GroES chaperonin family. Heptamer of 7 subunits arranged in a ring. Interacts with the chaperonin GroEL.

The protein resides in the cytoplasm. In terms of biological role, together with the chaperonin GroEL, plays an essential role in assisting protein folding. The GroEL-GroES system forms a nano-cage that allows encapsulation of the non-native substrate proteins and provides a physical environment optimized to promote and accelerate protein folding. GroES binds to the apical surface of the GroEL ring, thereby capping the opening of the GroEL channel. In Listeria monocytogenes serotype 4b (strain CLIP80459), this protein is Co-chaperonin GroES.